A 108-amino-acid chain; its full sequence is Pyrimidine/purine nucleoside phosphorylase (108 aa).

This sequence belongs to the nucleoside phosphorylase PpnP family.

It carries out the reaction a purine D-ribonucleoside + phosphate = a purine nucleobase + alpha-D-ribose 1-phosphate. It catalyses the reaction adenosine + phosphate = alpha-D-ribose 1-phosphate + adenine. The catalysed reaction is cytidine + phosphate = cytosine + alpha-D-ribose 1-phosphate. The enzyme catalyses guanosine + phosphate = alpha-D-ribose 1-phosphate + guanine. It carries out the reaction inosine + phosphate = alpha-D-ribose 1-phosphate + hypoxanthine. It catalyses the reaction thymidine + phosphate = 2-deoxy-alpha-D-ribose 1-phosphate + thymine. The catalysed reaction is uridine + phosphate = alpha-D-ribose 1-phosphate + uracil. The enzyme catalyses xanthosine + phosphate = alpha-D-ribose 1-phosphate + xanthine. Functionally, catalyzes the phosphorolysis of diverse nucleosides, yielding D-ribose 1-phosphate and the respective free bases. Can use uridine, adenosine, guanosine, cytidine, thymidine, inosine and xanthosine as substrates. Also catalyzes the reverse reactions. This is Pyrimidine/purine nucleoside phosphorylase from Polaromonas sp. (strain JS666 / ATCC BAA-500).